Here is a 178-residue protein sequence, read N- to C-terminus: Large ribosomal subunit protein uL5 (178 aa).

Belongs to the universal ribosomal protein uL5 family. As to quaternary structure, part of the 50S ribosomal subunit; part of the 5S rRNA/L5/L18/L25 subcomplex. Contacts the 5S rRNA and the P site tRNA. Forms a bridge to the 30S subunit in the 70S ribosome.

Its function is as follows. This is one of the proteins that bind and probably mediate the attachment of the 5S RNA into the large ribosomal subunit, where it forms part of the central protuberance. In the 70S ribosome it contacts protein S13 of the 30S subunit (bridge B1b), connecting the 2 subunits; this bridge is implicated in subunit movement. Contacts the P site tRNA; the 5S rRNA and some of its associated proteins might help stabilize positioning of ribosome-bound tRNAs. The chain is Large ribosomal subunit protein uL5 from Acinetobacter baylyi (strain ATCC 33305 / BD413 / ADP1).